The chain runs to 428 residues: GTPase Obg (428 aa).

Residues 1 to 158 (MFVDQVKIYV…RDVILELKVL (158 aa)) enclose the Obg domain. The disordered stretch occupies residues 117–145 (ARGGRGGRGNSRFATPTNPAPEIAENGEP). The 171-residue stretch at 159–329 (ADVGLVGFPS…LLFEVANLLE (171 aa)) folds into the OBG-type G domain. GTP is bound by residues 165-172 (GFPSVGKS), 190-194 (FTTIV), 212-215 (DLPG), 282-285 (NKMD), and 310-312 (SAV). Residues S172 and T192 each contribute to the Mg(2+) site. Residues 350–428 (KLETEGVKFD…ILEYEFEFID (79 aa)) form the OCT domain.

The protein belongs to the TRAFAC class OBG-HflX-like GTPase superfamily. OBG GTPase family. In terms of assembly, monomer. Requires Mg(2+) as cofactor.

The protein resides in the cytoplasm. Its function is as follows. An essential GTPase which binds GTP, GDP and possibly (p)ppGpp with moderate affinity, with high nucleotide exchange rates and a fairly low GTP hydrolysis rate. Plays a role in control of the cell cycle, stress response, ribosome biogenesis and in those bacteria that undergo differentiation, in morphogenesis control. The chain is GTPase Obg from Bacillus cereus (strain ATCC 10987 / NRS 248).